Here is a 256-residue protein sequence, read N- to C-terminus: Late embryogenesis abundant protein 32 (256 aa).

Basic and acidic residues predominate over residues 1 to 14; that stretch reads MSQEQPRRPREPVK. Residues 1 to 20 form a disordered region; that stretch reads MSQEQPRRPREPVKYGDVFE. A Nuclear localization signal (NLS) motif is present at residues 5-9; it reads QPRRP. SMP domains are found at residues 13-66, 130-187, and 195-253; these read VKYG…TTNI, ITIG…HNAT, and IKLR…LNER.

This sequence belongs to the LEA type SMP family. As to expression, embryo specific, only in dry mature seeds. Expressed at low levels.

Its subcellular location is the cytoplasm. It is found in the nucleus. Its function is as follows. LEA proteins are late embryonic proteins abundant in higher plant seed embryos. The function of those proteins is not known. This Arabidopsis thaliana (Mouse-ear cress) protein is Late embryogenesis abundant protein 32.